The sequence spans 496 residues: 6-phosphogluconate dehydrogenase, decarboxylating (496 aa).

NADP(+)-binding positions include Gly13–Ile18, Asp24–Val26, Ile68–His70, and Asn96. Substrate contacts are provided by residues Asn96 and Ser122–Gly124. Lys178 functions as the Proton acceptor in the catalytic mechanism. Position 181 to 182 (His181 to Asn182) interacts with substrate. Glu185 (proton donor) is an active-site residue. Positions 300 and 468 each coordinate substrate. The tract at residues Pro476–Lys496 is disordered.

This sequence belongs to the 6-phosphogluconate dehydrogenase family. Homodimer.

The protein localises to the cytoplasm. The enzyme catalyses 6-phospho-D-gluconate + NADP(+) = D-ribulose 5-phosphate + CO2 + NADPH. It participates in carbohydrate degradation; pentose phosphate pathway; D-ribulose 5-phosphate from D-glucose 6-phosphate (oxidative stage): step 3/3. Functionally, catalyzes the oxidative decarboxylation of 6-phosphogluconate to ribulose 5-phosphate and CO(2), with concomitant reduction of NADP to NADPH. The chain is 6-phosphogluconate dehydrogenase, decarboxylating from Emericella nidulans (strain FGSC A4 / ATCC 38163 / CBS 112.46 / NRRL 194 / M139) (Aspergillus nidulans).